The primary structure comprises 154 residues: Large ribosomal subunit protein uL13 (154 aa).

The protein belongs to the universal ribosomal protein uL13 family. Part of the 50S ribosomal subunit.

Functionally, this protein is one of the early assembly proteins of the 50S ribosomal subunit, although it is not seen to bind rRNA by itself. It is important during the early stages of 50S assembly. This Sinorhizobium medicae (strain WSM419) (Ensifer medicae) protein is Large ribosomal subunit protein uL13.